Here is a 207-residue protein sequence, read N- to C-terminus: Large ribosomal subunit protein uL4 (207 aa).

Residues 49–78 (HAVKNRSAVRGGGRKPWRQKGTGRARQGSI) form a disordered region. Residues 60-71 (GGRKPWRQKGTG) are compositionally biased toward basic residues.

The protein belongs to the universal ribosomal protein uL4 family. Part of the 50S ribosomal subunit.

One of the primary rRNA binding proteins, this protein initially binds near the 5'-end of the 23S rRNA. It is important during the early stages of 50S assembly. It makes multiple contacts with different domains of the 23S rRNA in the assembled 50S subunit and ribosome. Its function is as follows. Forms part of the polypeptide exit tunnel. In Latilactobacillus sakei subsp. sakei (strain 23K) (Lactobacillus sakei subsp. sakei), this protein is Large ribosomal subunit protein uL4.